Consider the following 155-residue polypeptide: 6,7-dimethyl-8-ribityllumazine synthase (155 aa).

Residues Phe22, 56–58 (AFE), and 80–82 (AVI) each bind 5-amino-6-(D-ribitylamino)uracil. 85-86 (NT) lines the (2S)-2-hydroxy-3-oxobutyl phosphate pocket. His88 functions as the Proton donor in the catalytic mechanism. Position 113 (Phe113) interacts with 5-amino-6-(D-ribitylamino)uracil. A (2S)-2-hydroxy-3-oxobutyl phosphate-binding site is contributed by Arg127.

The protein belongs to the DMRL synthase family.

It carries out the reaction (2S)-2-hydroxy-3-oxobutyl phosphate + 5-amino-6-(D-ribitylamino)uracil = 6,7-dimethyl-8-(1-D-ribityl)lumazine + phosphate + 2 H2O + H(+). It participates in cofactor biosynthesis; riboflavin biosynthesis; riboflavin from 2-hydroxy-3-oxobutyl phosphate and 5-amino-6-(D-ribitylamino)uracil: step 1/2. Its function is as follows. Catalyzes the formation of 6,7-dimethyl-8-ribityllumazine by condensation of 5-amino-6-(D-ribitylamino)uracil with 3,4-dihydroxy-2-butanone 4-phosphate. This is the penultimate step in the biosynthesis of riboflavin. This Streptococcus pneumoniae serotype 2 (strain D39 / NCTC 7466) protein is 6,7-dimethyl-8-ribityllumazine synthase.